Here is a 118-residue protein sequence, read N- to C-terminus: Small ribosomal subunit protein uS13 (118 aa).

A disordered region spans residues 94 to 118 (SLPLRGQRTKTNARTRKGPRKPIKK).

The protein belongs to the universal ribosomal protein uS13 family. In terms of assembly, part of the 30S ribosomal subunit. Forms a loose heterodimer with protein S19. Forms two bridges to the 50S subunit in the 70S ribosome.

Its function is as follows. Located at the top of the head of the 30S subunit, it contacts several helices of the 16S rRNA. In the 70S ribosome it contacts the 23S rRNA (bridge B1a) and protein L5 of the 50S subunit (bridge B1b), connecting the 2 subunits; these bridges are implicated in subunit movement. Contacts the tRNAs in the A and P-sites. The sequence is that of Small ribosomal subunit protein uS13 from Vibrio vulnificus (strain CMCP6).